The following is a 327-amino-acid chain: MSSPIRIAVTGAAGQISYSLLFRIAAGDMLGSSQPVILQLLDIPESGKVLDGVLMELQDCAFPLLTDIIVTHDPMIAFDQADIAILVGARPRGKGMERKDLLQTNGEIFREQGRALNQVVKRDAKILVVGNPANTNTLITMKNAPDLSPENFSGMLRLDHNRALSQVAMKLNQPVSHIRKMIVWGNHSSTQFPDLSHAEIDHQKVIDLIKDQTWVENSFIPTVQNRGAVVIEARGLSSAASAANAIIDHMRDWIFGTRDDDWITMGILSDGSYKIPKGVIYGFPVVCKNGGRKIVQGLEISPFSRTRLDIAYDELTQELDSIKHLLL.

An NAD(+)-binding site is contributed by 11–17 (GAAGQIS). Positions 92 and 98 each coordinate substrate. Residues N105, Q112, and 129–131 (VGN) each bind NAD(+). N131 and R162 together coordinate substrate. H187 acts as the Proton acceptor in catalysis.

This sequence belongs to the LDH/MDH superfamily. MDH type 2 family.

It catalyses the reaction (S)-malate + NAD(+) = oxaloacetate + NADH + H(+). Its function is as follows. Catalyzes the reversible oxidation of malate to oxaloacetate. In Nitrosomonas europaea (strain ATCC 19718 / CIP 103999 / KCTC 2705 / NBRC 14298), this protein is Malate dehydrogenase.